Consider the following 55-residue polypeptide: Large ribosomal subunit protein bL33 (55 aa).

Belongs to the bacterial ribosomal protein bL33 family.

This chain is Large ribosomal subunit protein bL33, found in Xanthobacter autotrophicus (strain ATCC BAA-1158 / Py2).